We begin with the raw amino-acid sequence, 458 residues long: RuvB-like helicase 1 (458 aa).

The segment covering Met1–Thr18 has biased composition (basic and acidic residues). The disordered stretch occupies residues Met1–Ala20. Gly73 to Thr80 is a binding site for ATP.

It belongs to the RuvB family. May form heterododecamers with RVB2. Component of the SWR1 chromatin remodeling complex, the INO80 chromatin remodeling complex, and of the R2TP complex.

It localises to the nucleus. It carries out the reaction ATP + H2O = ADP + phosphate + H(+). Its function is as follows. DNA helicase which participates in several chromatin remodeling complexes, including the SWR1 and the INO80 complexes. The SWR1 complex mediates the ATP-dependent exchange of histone H2A for the H2A variant HZT1 leading to transcriptional regulation of selected genes by chromatin remodeling. The INO80 complex remodels chromatin by shifting nucleosomes and is involved in DNA repair. Also involved in pre-rRNA processing. The sequence is that of RuvB-like helicase 1 (RVB1) from Candida albicans (strain SC5314 / ATCC MYA-2876) (Yeast).